Here is a 353-residue protein sequence, read N- to C-terminus: D-alanine--D-alanine ligase A (353 aa).

The ATP-grasp domain occupies 141–346 (KRLVNEAGLS…YPEIINRLVA (206 aa)). 169–224 (EQALGLPIFIKPARQGSSVGVHKVVTEADYQAAMSDGFTYDDKLLAEEFIQAREVE) is a binding site for ATP. Positions 300, 313, and 315 each coordinate Mg(2+).

Belongs to the D-alanine--D-alanine ligase family. It depends on Mg(2+) as a cofactor. The cofactor is Mn(2+).

Its subcellular location is the cytoplasm. The catalysed reaction is 2 D-alanine + ATP = D-alanyl-D-alanine + ADP + phosphate + H(+). It participates in cell wall biogenesis; peptidoglycan biosynthesis. Cell wall formation. The polypeptide is D-alanine--D-alanine ligase A (Brucella suis biovar 1 (strain 1330)).